The following is a 21-amino-acid chain: Bombinin-H1/H3 (21 aa).

Ile-2 is subject to D-allo-isoleucine; in form H3. Isoleucine amide is present on Ile-20.

Belongs to the bombinin family. As to expression, expressed by the skin glands.

Its subcellular location is the secreted. Has antimicrobial and hemolytic activities. The polypeptide is Bombinin-H1/H3 (Bombina variegata (Yellow-bellied toad)).